A 295-amino-acid chain; its full sequence is Small ribosomal subunit protein uS2 (295 aa).

Residues 263–295 (KKFSKTKNIDEETNTEFEKALNDADENKNSDNA) are disordered. Residues 278 to 295 (EFEKALNDADENKNSDNA) are compositionally biased toward basic and acidic residues.

Belongs to the universal ribosomal protein uS2 family.

This Rickettsia peacockii (strain Rustic) protein is Small ribosomal subunit protein uS2.